The following is a 154-amino-acid chain: 3-dehydroquinate dehydratase (154 aa).

Residue tyrosine 23 is the Proton acceptor of the active site. Substrate is bound by residues asparagine 75, histidine 81, and aspartate 88. Histidine 101 acts as the Proton donor in catalysis. Substrate-binding positions include 102–103 and arginine 112; that span reads LS.

Belongs to the type-II 3-dehydroquinase family. As to quaternary structure, homododecamer.

It catalyses the reaction 3-dehydroquinate = 3-dehydroshikimate + H2O. The protein operates within metabolic intermediate biosynthesis; chorismate biosynthesis; chorismate from D-erythrose 4-phosphate and phosphoenolpyruvate: step 3/7. Functionally, catalyzes a trans-dehydration via an enolate intermediate. The chain is 3-dehydroquinate dehydratase from Teredinibacter turnerae (strain ATCC 39867 / T7901).